A 285-amino-acid chain; its full sequence is MKYIGAHVSAAGGLANAAIRAAEIDATAFALFTKNQRQWRAAPLTAQIIDDFKAACEKYHYSPAQILPHDSYLINLGHPVSEALEKSRDAFIDEMQRCEQLGLSLLNFHPGSHLQQIPEEECLARIAESINIALEKTQGVTAVIENTAGQGSNLGFRFEHLAAIIDGVDDKSRVGVCIDTCHAFAAGYDLRTTDECEKTFADFERVVGFTYLRGMHLNDAKSAFGSRVDRHHSLGEGNIGHDAFRWIMQDDRFDGIPLILETINPDIWAEEIAWLKAQQTAKVVA.

9 residues coordinate Zn(2+): His69, His109, Glu145, Asp179, His182, His216, Asp229, His231, and Glu261.

It belongs to the AP endonuclease 2 family. Requires Zn(2+) as cofactor.

The enzyme catalyses Endonucleolytic cleavage to 5'-phosphooligonucleotide end-products.. Endonuclease IV plays a role in DNA repair. It cleaves phosphodiester bonds at apurinic or apyrimidinic (AP) sites, generating a 3'-hydroxyl group and a 5'-terminal sugar phosphate. The protein is Probable endonuclease 4 of Citrobacter koseri (strain ATCC BAA-895 / CDC 4225-83 / SGSC4696).